Here is a 497-residue protein sequence, read N- to C-terminus: Interferon regulatory factor 5 (497 aa).

A Nuclear localization signal motif is present at residues 12–18 (PRRVRLK). The segment at residues 14–122 (RVRLKPWLVA…QPYKIYEVCS (109 aa)) is a DNA-binding region (IRF tryptophan pentad repeat). Residues 124-178 (GPAPTESQPTDDYVLGEEEEEEEEELQRMLPGLSITEPALPGPPNAPYSLPKEDT) form a disordered region. A compositionally biased stretch (acidic residues) spans 137–148 (VLGEEEEEEEEE). Positions 149–159 (LQRMLPGLSIT) match the Nuclear export signal motif. Ser-157 carries the phosphoserine; by TBK1 modification. Position 300 is a phosphoserine (Ser-300). Residues Lys-410 and Lys-411 each participate in a glycyl lysine isopeptide (Lys-Gly) (interchain with G-Cter in ubiquitin) cross-link. Phosphoserine is present on Ser-430. Ser-434 carries the phosphoserine; by IKKB modification. 2 positions are modified to phosphoserine: Ser-436 and Ser-439. At Ser-445 the chain carries Phosphoserine; by IKKB.

This sequence belongs to the IRF family. In terms of assembly, homodimer, when phosphorylated. Interacts with TASL (via pLxIS motif); interaction takes place downstream of TLR7, TLR8 or TLR9, leading to its activation. Interacts with MYD88 and TRAF6. Post-translationally, phosphorylation of serine and threonine residues by IKBKB in a C-terminal autoinhibitory region, stimulates dimerization, transport into the nucleus, assembly with the coactivator CBP/EP300 and initiation of transcription. 'Lys-63'-linked polyubiquitination by TRAF6 is required for activation.

It localises to the cytoplasm. The protein localises to the nucleus. Its activity is regulated as follows. Maintained as a monomer in an autoinhibited state. Phosphorylation and activation follow the following steps: innate adapter protein TASL recruits IRF5, thereby licensing IRF5 for phosphorylation by IKBKB. Phosphorylated IRF5 dissociates from the adapter proteins, dimerizes, and then enters the nucleus to induce IFNs. Its function is as follows. Transcription factor that plays a critical role in innate immunity by activating expression of type I interferon (IFN) IFNA and INFB and inflammatory cytokines downstream of endolysosomal toll-like receptors TLR7, TLR8 and TLR9. Regulates the transcription of type I IFN genes (IFN-alpha and IFN-beta) and IFN-stimulated genes (ISG) by binding to an interferon-stimulated response element (ISRE) in their promoters. Can efficiently activate both the IFN-beta (IFNB) and the IFN-alpha (IFNA) genes and mediate their induction downstream of the TLR-activated, MyD88-dependent pathway. This chain is Interferon regulatory factor 5, found in Mus musculus (Mouse).